We begin with the raw amino-acid sequence, 415 residues long: 4-hydroxy-3-methylbut-2-en-1-yl diphosphate synthase (flavodoxin) (415 aa).

[4Fe-4S] cluster contacts are provided by Cys-298, Cys-301, Cys-344, and Glu-351.

It belongs to the IspG family. [4Fe-4S] cluster serves as cofactor.

The catalysed reaction is (2E)-4-hydroxy-3-methylbut-2-enyl diphosphate + oxidized [flavodoxin] + H2O + 2 H(+) = 2-C-methyl-D-erythritol 2,4-cyclic diphosphate + reduced [flavodoxin]. Its pathway is isoprenoid biosynthesis; isopentenyl diphosphate biosynthesis via DXP pathway; isopentenyl diphosphate from 1-deoxy-D-xylulose 5-phosphate: step 5/6. In terms of biological role, converts 2C-methyl-D-erythritol 2,4-cyclodiphosphate (ME-2,4cPP) into 1-hydroxy-2-methyl-2-(E)-butenyl 4-diphosphate. The polypeptide is 4-hydroxy-3-methylbut-2-en-1-yl diphosphate synthase (flavodoxin) (Solibacter usitatus (strain Ellin6076)).